The following is a 509-amino-acid chain: Histidine--tRNA ligase (509 aa).

The protein belongs to the class-II aminoacyl-tRNA synthetase family. In terms of assembly, homodimer.

Its subcellular location is the cytoplasm. It carries out the reaction tRNA(His) + L-histidine + ATP = L-histidyl-tRNA(His) + AMP + diphosphate + H(+). In Rhodopseudomonas palustris (strain TIE-1), this protein is Histidine--tRNA ligase.